The following is a 173-amino-acid chain: Bifunctional protein PyrR (173 aa).

The PRPP-binding signature appears at 93–105 (IILVDDVLYTGRT).

Belongs to the purine/pyrimidine phosphoribosyltransferase family. PyrR subfamily. In terms of assembly, homodimer and homohexamer; in equilibrium.

It carries out the reaction UMP + diphosphate = 5-phospho-alpha-D-ribose 1-diphosphate + uracil. Its function is as follows. Regulates transcriptional attenuation of the pyrimidine nucleotide (pyr) operon by binding in a uridine-dependent manner to specific sites on pyr mRNA. This disrupts an antiterminator hairpin in the RNA and favors formation of a downstream transcription terminator, leading to a reduced expression of downstream genes. Functionally, also displays a weak uracil phosphoribosyltransferase activity which is not physiologically significant. This chain is Bifunctional protein PyrR, found in Streptococcus equi subsp. zooepidemicus (strain MGCS10565).